Here is a 238-residue protein sequence, read N- to C-terminus: Survival of motor neuron-related-splicing factor 30 (238 aa).

Residues 72 to 132 enclose the Tudor domain; it reads SWKVGDKCMA…KPVEEGRKAK (61 aa). The short motif at 142–160 is the Nuclear localization signal element; the sequence is KKEMIAQQREYKKKKALKK. Ser201 is subject to Phosphoserine. Lys219 bears the N6-acetyllysine mark.

Belongs to the SMN family. Associates with spliceosomes. Associates with U4/U5/U6 tri-snRNP and with U2 snRNP. Interacts (via Tudor domain) with SNRPD3 (via C-terminus); the interaction is direct. Detected at intermediate levels in skeletal muscle, and at low levels in heart and pancreas.

Its subcellular location is the nucleus speckle. It is found in the nucleus. It localises to the cajal body. Involved in spliceosome assembly. The polypeptide is Survival of motor neuron-related-splicing factor 30 (SMNDC1) (Homo sapiens (Human)).